The sequence spans 78 residues: Large ribosomal subunit protein bL28 (78 aa).

Positions 1-21 (MSRVCQVTGKRPVSGNNRSHA) are disordered.

It belongs to the bacterial ribosomal protein bL28 family.

The polypeptide is Large ribosomal subunit protein bL28 (Serratia proteamaculans (strain 568)).